The sequence spans 481 residues: Ribosomal protein uS12 methylthiotransferase RimO (481 aa).

In terms of domain architecture, MTTase N-terminal spans 8–124 (MTVHLVSMGC…IAGRLRTILD (117 aa)). [4Fe-4S] cluster-binding residues include cysteine 17, cysteine 53, and cysteine 87. The disordered stretch occupies residues 148–188 (PTARAEVSVPGHGTAPDLSASVTPDSGPRATRRRLGTGPSA). A Radical SAM core domain is found at 182–413 (LGTGPSAPLK…DLTDELVSQR (232 aa)). The [4Fe-4S] cluster site is built by cysteine 196, cysteine 200, and cysteine 203. Residues 415–480 (EDRIGTRGRV…GVDLVARPAN (66 aa)) form the TRAM domain.

This sequence belongs to the methylthiotransferase family. RimO subfamily. Requires [4Fe-4S] cluster as cofactor.

Its subcellular location is the cytoplasm. It carries out the reaction L-aspartate(89)-[ribosomal protein uS12]-hydrogen + (sulfur carrier)-SH + AH2 + 2 S-adenosyl-L-methionine = 3-methylsulfanyl-L-aspartate(89)-[ribosomal protein uS12]-hydrogen + (sulfur carrier)-H + 5'-deoxyadenosine + L-methionine + A + S-adenosyl-L-homocysteine + 2 H(+). In terms of biological role, catalyzes the methylthiolation of an aspartic acid residue of ribosomal protein uS12. In Cutibacterium acnes (strain DSM 16379 / KPA171202) (Propionibacterium acnes), this protein is Ribosomal protein uS12 methylthiotransferase RimO.